A 280-amino-acid polypeptide reads, in one-letter code: Eukaryotic translation initiation factor 3 subunit F-1 (280 aa).

Residues 8 to 138 (VRVHPVVLFQ…LRAYVCIQLG (131 aa)) enclose the MPN domain.

This sequence belongs to the eIF-3 subunit F family. In terms of assembly, component of the eukaryotic translation initiation factor 3 (eIF-3) complex. The eIF-3 complex interacts with pix.

The protein resides in the cytoplasm. Component of the eukaryotic translation initiation factor 3 (eIF-3) complex, which is involved in protein synthesis of a specialized repertoire of mRNAs and, together with other initiation factors, stimulates binding of mRNA and methionyl-tRNAi to the 40S ribosome. The eIF-3 complex specifically targets and initiates translation of a subset of mRNAs involved in cell proliferation. This is Eukaryotic translation initiation factor 3 subunit F-1 from Drosophila willistoni (Fruit fly).